The following is a 399-amino-acid chain: Succinate--CoA ligase [ADP-forming] subunit beta (399 aa).

Positions 9–254 constitute an ATP-grasp domain; sequence KELLAKYGIG…ETEEDPAEVE (246 aa). ATP is bound by residues Lys46, 53 to 55, Val112, and Glu117; that span reads GRG. Mg(2+)-binding residues include Asn209 and Asp223. Substrate-binding positions include Asn274 and 331–333; that span reads GIM.

The protein belongs to the succinate/malate CoA ligase beta subunit family. Heterotetramer of two alpha and two beta subunits. Mg(2+) is required as a cofactor.

It carries out the reaction succinate + ATP + CoA = succinyl-CoA + ADP + phosphate. The enzyme catalyses GTP + succinate + CoA = succinyl-CoA + GDP + phosphate. The protein operates within carbohydrate metabolism; tricarboxylic acid cycle; succinate from succinyl-CoA (ligase route): step 1/1. Succinyl-CoA synthetase functions in the citric acid cycle (TCA), coupling the hydrolysis of succinyl-CoA to the synthesis of either ATP or GTP and thus represents the only step of substrate-level phosphorylation in the TCA. The beta subunit provides nucleotide specificity of the enzyme and binds the substrate succinate, while the binding sites for coenzyme A and phosphate are found in the alpha subunit. In Erythrobacter litoralis (strain HTCC2594), this protein is Succinate--CoA ligase [ADP-forming] subunit beta.